A 2567-amino-acid polypeptide reads, in one-letter code: Highly reducing polyketide synthase sor1 (2567 aa).

Residues 14–436 (SEPIAIIGMS…GANAHIILED (423 aa)) form the Ketosynthase family 3 (KS3) domain. Residues Cys187, His322, and His359 each act as for beta-ketoacyl synthase activity in the active site. Positions 550-841 (VFTGQGAQWW…VVEVGPHTAL (292 aa)) are malonyl-CoA:ACP transacylase (MAT) domain. Residues 939 to 1079 (HHLLGSLVEG…GLISIEFEAS (141 aa)) are N-terminal hotdog fold. The interval 939-1249 (HHLLGSLVEG…GFSYQSLGRS (311 aa)) is dehydratase (DH) domain. The 314-residue stretch at 939 to 1252 (HHLLGSLVEG…YQSLGRSVSL (314 aa)) folds into the PKS/mFAS DH domain. Residue His971 is the Proton acceptor; for dehydratase activity of the active site. Residues 1095 to 1252 (YKRQIPPAQL…YQSLGRSVSL (158 aa)) are C-terminal hotdog fold. Asp1161 functions as the Proton donor; for dehydratase activity in the catalytic mechanism. The segment at 1426–1534 (LEIGASTGGI…RSLLKPGGTL (109 aa)) is methyltransferase (CMet) domain. Positions 1852-2163 (FLPELLVFGD…TEEETGKRVL (312 aa)) are enoyl reductase (ER) domain. The ketoreductase (KR) domain stretch occupies residues 2187–2369 (ASYLIVGGNG…AVSIDLSLVD (183 aa)). A Carrier domain is found at 2481-2558 (EAISVVGSAV…QLVANVVDRS (78 aa)). Ser2518 carries the O-(pantetheine 4'-phosphoryl)serine modification.

It participates in secondary metabolite biosynthesis. In terms of biological role, highly reducing polyketide synthase; part of the SOR gene cluster that mediates the biosynthesis of sorbicillinoids, a diverse group of yellow secondary metabolites that restrict growth of competing pathogenic fungi but not of bacteria. Sorbicillinoids biosynthesis requires the action of two PKSs. The SOR cluster is required for the production of trichodimerol and dihydrotrichotetronin, with sor2 being sufficient for production of trichodimerol, but not dihydrotrichotetronin in the light. Sor1 iteratively combines three acetyl units and the growing chain is modified by the ketoacyl reductase subunit, and optional by the enoyl reductase subunit in the second cycle. The polyketide is then handed over to the PKS sor2, which adds three more acetyl units, and two methyl groups. Sor2 releases an aldehyde, which undergoes spontaneous cyclization resulting in the formation of sorbicillin or 2',3'-dihydrosorbicillin. The monooxygenase sor5 oxidizes sorbicillin and 2',3'-dihydrosorbicillin to 2',3'-dihydrosorbicillinol and sorbicillinol, respectively. The oxidoreductase sor8 further converts sorbicillinol into oxosorbicillinol. Sorbicillinol is the building block for the other sorbicillinoids such as disorbicillinol, bisvertinolon, dihydrobisvertinolone, and dihydrotrichotetronine. This is Highly reducing polyketide synthase sor1 from Hypocrea jecorina (strain QM6a) (Trichoderma reesei).